We begin with the raw amino-acid sequence, 312 residues long: uncharacterized protein (312 aa).

Residues 8 to 65 (PGLTCFEIFLAIAEAGSLGGAARELGLTQQAVSRRLASMEAQIGVRLAIRTTRGSQLT) form the HTH lysR-type domain. The segment at residues 25-45 (LGGAARELGLTQQAVSRRLAS) is a DNA-binding region (H-T-H motif).

The protein belongs to the LysR transcriptional regulatory family.

This is an uncharacterized protein from Mycobacterium tuberculosis (strain CDC 1551 / Oshkosh).